Here is a 176-residue protein sequence, read N- to C-terminus: Peptidoglycan-associated lipoprotein (176 aa).

An N-terminal signal peptide occupies residues 1–32 (MSRIDTPAASRMQTIARNPVMIALVMTLALAG). Cysteine 33 carries the N-palmitoyl cysteine lipid modification. The S-diacylglycerol cysteine moiety is linked to residue cysteine 33. Residues 58–175 (QQDFTVNVGD…RAVTVLGGAG (118 aa)) form the OmpA-like domain.

This sequence belongs to the Pal lipoprotein family. As to quaternary structure, the Tol-Pal system is composed of five core proteins: the inner membrane proteins TolA, TolQ and TolR, the periplasmic protein TolB and the outer membrane protein Pal. They form a network linking the inner and outer membranes and the peptidoglycan layer.

It is found in the cell outer membrane. In terms of biological role, part of the Tol-Pal system, which plays a role in outer membrane invagination during cell division and is important for maintaining outer membrane integrity. This is Peptidoglycan-associated lipoprotein from Rhizobium meliloti (strain 1021) (Ensifer meliloti).